A 412-amino-acid chain; its full sequence is GATOR complex protein NPRL2 (412 aa).

Belongs to the NPR2 family. Component of the GATOR complex consisting of mio, Nup44A/Seh1, Im11, Nplr3, Nplr2, Wdr24, Wdr59 and Sec13. Within the GATOR complex, probable component of the GATOR1 subcomplex which is likely composed of Iml1, Nplr2 and Nplr3. Interacts with Nprl3.

It is found in the cytoplasm. The protein localises to the lysosome. In terms of biological role, an essential component of the GATOR subcomplex GATOR1 which functions as an inhibitor of the amino acid-sensing branch of the TORC1 signaling pathway. The two GATOR subcomplexes, GATOR1 and GATOR2, regulate the TORC1 pathway in order to mediate metabolic homeostasis, female gametogenesis and the response to amino acid limitation and complete starvation. The function of GATOR1 in negatively regulating the TORC1 pathway is essential for maintaining baseline levels of TORC1 activity under nutrient rich conditions, and for promoting survival during amino acid or complete starvation by inhibiting TORC1-dependent cell growth and promoting catabolic metabolism and autophagy. In addition, this inhibition of TORC1 is necessary to maintain female fertility under normal conditions and during periods of nutrient stress. GATOR1 and GATOR2 act at different stages of oogenesis to regulate TORC1 in order to control meiotic entry and promote oocyte growth and development. After exactly four mitotic cyst divisions, the GATOR1 complex members (Iml1, Nprl2 and Nprl3) down-regulate TORC1 to slow cellular metabolism and promote the mitotic/meiotic transition. At later stages of oogenesis, the mio and Nup44A components of the GATOR2 complex inhibit GATOR1 and thus activate TORC1 to promote meiotic progression, and drive oocyte growth and development. The chain is GATOR complex protein NPRL2 from Drosophila melanogaster (Fruit fly).